Reading from the N-terminus, the 770-residue chain is Multifunctional tryptophan biosynthesis protein (770 aa).

Residues 25 to 225 (NVILIDNYDS…LKLTAGTWEG (201 aa)) form the Glutamine amidotransferase type-1 domain. 76–78 (GPG) provides a ligand contact to L-glutamine. Cys-104 acts as the Nucleophile; for GATase activity in catalysis. Residues Gln-108 and 154-155 (SL) contribute to the L-glutamine site. Residues His-199 and Glu-201 each act as for GATase activity in the active site. The disordered stretch occupies residues 228–251 (KHFGEQSSTTKATVPSNPPPKTDK). Residues 232 to 242 (EQSSTTKATVP) are compositionally biased toward polar residues. The indole-3-glycerol phosphate synthase stretch occupies residues 255-519 (ILERIYDHRR…DTATFIAELL (265 aa)). The tract at residues 535 to 770 (LVKICGTRSE…RAFVQAVRGL (236 aa)) is N-(5'-phosphoribosyl)anthranilate isomerase.

It carries out the reaction N-(5-phospho-beta-D-ribosyl)anthranilate = 1-(2-carboxyphenylamino)-1-deoxy-D-ribulose 5-phosphate. It catalyses the reaction 1-(2-carboxyphenylamino)-1-deoxy-D-ribulose 5-phosphate + H(+) = (1S,2R)-1-C-(indol-3-yl)glycerol 3-phosphate + CO2 + H2O. The catalysed reaction is chorismate + L-glutamine = anthranilate + pyruvate + L-glutamate + H(+). The protein operates within amino-acid biosynthesis; L-tryptophan biosynthesis; L-tryptophan from chorismate: step 1/5. It participates in amino-acid biosynthesis; L-tryptophan biosynthesis; L-tryptophan from chorismate: step 3/5. Its pathway is amino-acid biosynthesis; L-tryptophan biosynthesis; L-tryptophan from chorismate: step 4/5. Functionally, trifunctional enzyme bearing the Gln amidotransferase (GATase) domain of anthranilate synthase, indole-glycerolphosphate synthase, and phosphoribosylanthranilate isomerase activities. In Aspergillus niger, this protein is Multifunctional tryptophan biosynthesis protein (trpC).